Consider the following 58-residue polypeptide: UPF0391 membrane protein ABO_0024 (58 aa).

The next 2 helical transmembrane spans lie at 4-24 and 28-48; these read WALT…GGIA and ASIA…SLVV.

This sequence belongs to the UPF0391 family.

Its subcellular location is the cell membrane. The polypeptide is UPF0391 membrane protein ABO_0024 (Alcanivorax borkumensis (strain ATCC 700651 / DSM 11573 / NCIMB 13689 / SK2)).